Reading from the N-terminus, the 248-residue chain is tRNA (guanine-N(1)-)-methyltransferase (248 aa).

Residues G113 and 133 to 138 contribute to the S-adenosyl-L-methionine site; that span reads IGDFVL.

It belongs to the RNA methyltransferase TrmD family. As to quaternary structure, homodimer.

It localises to the cytoplasm. The enzyme catalyses guanosine(37) in tRNA + S-adenosyl-L-methionine = N(1)-methylguanosine(37) in tRNA + S-adenosyl-L-homocysteine + H(+). Functionally, specifically methylates guanosine-37 in various tRNAs. The protein is tRNA (guanine-N(1)-)-methyltransferase of Dehalococcoides mccartyi (strain CBDB1).